Reading from the N-terminus, the 263-residue chain is Ribonuclease HII (263 aa).

One can recognise an RNase H type-2 domain in the interval 71 to 262 (QAIAGIDEVG…VKSMCCDSTN (192 aa)). Residues D77, E78, and D172 each contribute to the a divalent metal cation site.

The protein belongs to the RNase HII family. Mn(2+) is required as a cofactor. Requires Mg(2+) as cofactor.

The protein localises to the cytoplasm. It carries out the reaction Endonucleolytic cleavage to 5'-phosphomonoester.. Endonuclease that specifically degrades the RNA of RNA-DNA hybrids. The sequence is that of Ribonuclease HII from Streptococcus pyogenes serotype M3 (strain ATCC BAA-595 / MGAS315).